A 508-amino-acid polypeptide reads, in one-letter code: Ankyrin repeat domain-containing protein 34B (508 aa).

ANK repeat units lie at residues 9-38, 42-79, 83-113, and 117-146; these read TDGNSLIKAVHQSRLRLTRLLLEGGAYINE, RGETPLMIACKTKHVDQQSVGRAKMVKYLLENSADPNI, SGKSALMHACLERAGPEVVSLLLKSGADLSL, and SGYSALVYAINAEDRDTLKVLLSACQAKGK. The tract at residues 157–185 is disordered; the sequence is PSGRHTTQHHLNMPPADMDGSHPPATPSE. Position 260 is a phosphoserine (Ser260). A Phosphothreonine modification is found at Thr269. A Phosphoserine modification is found at Ser293. A compositionally biased stretch (polar residues) spans 361–370; it reads GANHYSSDSQ. A disordered region spans residues 361–380; that stretch reads GANHYSSDSQLAEGVTPPTV.

Belongs to the ANKRD34 family. In terms of processing, phosphorylated. As to expression, specifically and constitutively expressed in brain (at protein level).

Its subcellular location is the cytoplasm. It localises to the nucleus. This Mus musculus (Mouse) protein is Ankyrin repeat domain-containing protein 34B (Ankrd34b).